The chain runs to 272 residues: Hydroxyethylthiazole kinase (272 aa).

Substrate is bound at residue M46. Positions 122 and 168 each coordinate ATP. G195 contributes to the substrate binding site.

The protein belongs to the Thz kinase family. Requires Mg(2+) as cofactor.

The enzyme catalyses 5-(2-hydroxyethyl)-4-methylthiazole + ATP = 4-methyl-5-(2-phosphooxyethyl)-thiazole + ADP + H(+). The protein operates within cofactor biosynthesis; thiamine diphosphate biosynthesis; 4-methyl-5-(2-phosphoethyl)-thiazole from 5-(2-hydroxyethyl)-4-methylthiazole: step 1/1. Functionally, catalyzes the phosphorylation of the hydroxyl group of 4-methyl-5-beta-hydroxyethylthiazole (THZ). This Alkaliphilus metalliredigens (strain QYMF) protein is Hydroxyethylthiazole kinase.